The sequence spans 101 residues: Putative UPF0377 protein YBL108W (101 aa).

Belongs to the UPF0377 family.

The protein is Putative UPF0377 protein YBL108W of Saccharomyces cerevisiae (strain ATCC 204508 / S288c) (Baker's yeast).